Here is a 215-residue protein sequence, read N- to C-terminus: Guanylate kinase (215 aa).

Positions 6 to 185 (GAILVLSGPS…SEKLLLSIAR (180 aa)) constitute a Guanylate kinase-like domain. 13–20 (GPSGSGKS) contributes to the ATP binding site.

The protein belongs to the guanylate kinase family.

The protein localises to the cytoplasm. The enzyme catalyses GMP + ATP = GDP + ADP. Its function is as follows. Essential for recycling GMP and indirectly, cGMP. This chain is Guanylate kinase, found in Wolinella succinogenes (strain ATCC 29543 / DSM 1740 / CCUG 13145 / JCM 31913 / LMG 7466 / NCTC 11488 / FDC 602W) (Vibrio succinogenes).